The primary structure comprises 357 residues: Phosphoribosylformylglycinamidine cyclo-ligase (357 aa).

The protein belongs to the AIR synthase family.

Its subcellular location is the cytoplasm. The enzyme catalyses 2-formamido-N(1)-(5-O-phospho-beta-D-ribosyl)acetamidine + ATP = 5-amino-1-(5-phospho-beta-D-ribosyl)imidazole + ADP + phosphate + H(+). It participates in purine metabolism; IMP biosynthesis via de novo pathway; 5-amino-1-(5-phospho-D-ribosyl)imidazole from N(2)-formyl-N(1)-(5-phospho-D-ribosyl)glycinamide: step 2/2. The protein is Phosphoribosylformylglycinamidine cyclo-ligase of Allorhizobium ampelinum (strain ATCC BAA-846 / DSM 112012 / S4) (Agrobacterium vitis (strain S4)).